Reading from the N-terminus, the 115-residue chain is NAD(P)H-quinone oxidoreductase subunit M (115 aa).

This sequence belongs to the complex I NdhM subunit family. NDH-1 can be composed of about 15 different subunits; different subcomplexes with different compositions have been identified which probably have different functions.

It localises to the cellular thylakoid membrane. The enzyme catalyses a plastoquinone + NADH + (n+1) H(+)(in) = a plastoquinol + NAD(+) + n H(+)(out). It carries out the reaction a plastoquinone + NADPH + (n+1) H(+)(in) = a plastoquinol + NADP(+) + n H(+)(out). NDH-1 shuttles electrons from an unknown electron donor, via FMN and iron-sulfur (Fe-S) centers, to quinones in the respiratory and/or the photosynthetic chain. The immediate electron acceptor for the enzyme in this species is believed to be plastoquinone. Couples the redox reaction to proton translocation, and thus conserves the redox energy in a proton gradient. Cyanobacterial NDH-1 also plays a role in inorganic carbon-concentration. The chain is NAD(P)H-quinone oxidoreductase subunit M from Prochlorococcus marinus (strain MIT 9312).